Reading from the N-terminus, the 348-residue chain is UDP-3-O-acylglucosamine N-acyltransferase (348 aa).

Catalysis depends on His-237, which acts as the Proton acceptor.

Belongs to the transferase hexapeptide repeat family. LpxD subfamily. As to quaternary structure, homotrimer.

It catalyses the reaction a UDP-3-O-[(3R)-3-hydroxyacyl]-alpha-D-glucosamine + a (3R)-hydroxyacyl-[ACP] = a UDP-2-N,3-O-bis[(3R)-3-hydroxyacyl]-alpha-D-glucosamine + holo-[ACP] + H(+). It participates in bacterial outer membrane biogenesis; LPS lipid A biosynthesis. Its function is as follows. Catalyzes the N-acylation of UDP-3-O-acylglucosamine using 3-hydroxyacyl-ACP as the acyl donor. Is involved in the biosynthesis of lipid A, a phosphorylated glycolipid that anchors the lipopolysaccharide to the outer membrane of the cell. The sequence is that of UDP-3-O-acylglucosamine N-acyltransferase from Geotalea daltonii (strain DSM 22248 / JCM 15807 / FRC-32) (Geobacter daltonii).